Consider the following 748-residue polypeptide: Spidroin-1 (748 aa).

Tandem repeats lie at residues 1-25, 26-38, 39-66, 67-96, 97-130, 131-158, 159-191, 192-204, 205-235, 236-262, 263-292, 293-305, 306-333, 334-360, 361-394, 395-424, 425-458, 459-485, 486-512, 513-525, 526-555, 556-582, 583-612, 613-642, and 643-655. The segment at 1–655 is 25 X approximate tandem repeats; the sequence is QGAGAAAAAA…ASAAASRLSS (655 aa).

The protein belongs to the silk fibroin family. As to quaternary structure, major subunit, with spidroin 2, of the dragline silk.

The protein localises to the secreted. Its subcellular location is the extracellular space. Functionally, spiders' major ampullate silk possesses unique characteristics of strength and elasticity. Fibroin consists of pseudocrystalline regions of antiparallel beta-sheet interspersed with elastic amorphous segments. The polypeptide is Spidroin-1 (Trichonephila clavipes (Golden silk orbweaver)).